The following is a 1305-amino-acid chain: DNA-directed DNA polymerase (1305 aa).

The protein belongs to the DNA polymerase type-C family.

It catalyses the reaction DNA(n) + a 2'-deoxyribonucleoside 5'-triphosphate = DNA(n+1) + diphosphate. Functionally, replicates viral genomic DNA. The polypeptide is DNA-directed DNA polymerase (Bacillus pumilus (Bacillus mesentericus)).